The following is a 491-amino-acid chain: Protein OrfX3 (491 aa).

It belongs to the TULIP P47 family. In terms of assembly, heterodimer of OrfX1 and OrfX3; crystallizes as a dimer of heterodimers.

Expression of the ptox operon (ntnh-orfX1-orfX2-orfX3-pmp1) in B.thuringiensis kills Anopheles but not Aedes mosquito 3rd instar larvae. The ntnh-pmp1 construct is about half as toxic. This is Protein OrfX3 from Paraclostridium bifermentans (Clostridium bifermentans).